The following is a 102-amino-acid chain: Small ribosomal subunit protein uS10 (102 aa).

The protein belongs to the universal ribosomal protein uS10 family. As to quaternary structure, part of the 30S ribosomal subunit.

Its function is as follows. Involved in the binding of tRNA to the ribosomes. The chain is Small ribosomal subunit protein uS10 from Agrobacterium fabrum (strain C58 / ATCC 33970) (Agrobacterium tumefaciens (strain C58)).